A 461-amino-acid chain; its full sequence is Asparagine--tRNA ligase (461 aa).

The protein belongs to the class-II aminoacyl-tRNA synthetase family. As to quaternary structure, homodimer.

It localises to the cytoplasm. The catalysed reaction is tRNA(Asn) + L-asparagine + ATP = L-asparaginyl-tRNA(Asn) + AMP + diphosphate + H(+). This chain is Asparagine--tRNA ligase, found in Nitratidesulfovibrio vulgaris (strain DP4) (Desulfovibrio vulgaris).